We begin with the raw amino-acid sequence, 568 residues long: Oxygen-dependent choline dehydrogenase (568 aa).

FAD is bound at residue Asp8–Glu37. Residue His477 is the Proton acceptor of the active site.

The protein belongs to the GMC oxidoreductase family. FAD is required as a cofactor.

The enzyme catalyses choline + A = betaine aldehyde + AH2. It catalyses the reaction betaine aldehyde + NAD(+) + H2O = glycine betaine + NADH + 2 H(+). It functions in the pathway amine and polyamine biosynthesis; betaine biosynthesis via choline pathway; betaine aldehyde from choline (cytochrome c reductase route): step 1/1. Its function is as follows. Involved in the biosynthesis of the osmoprotectant glycine betaine. Catalyzes the oxidation of choline to betaine aldehyde and betaine aldehyde to glycine betaine at the same rate. This Pseudomonas syringae pv. syringae (strain B728a) protein is Oxygen-dependent choline dehydrogenase.